Consider the following 286-residue polypeptide: Uridylate cyclase (286 aa).

The Guanylate cyclase domain occupies T90–S223. F93 lines the a ribonucleoside 5'-triphosphate pocket. Positions 95, 96, and 140 each coordinate Mn(2+).

It belongs to the adenylyl cyclase class-4/guanylyl cyclase family. Pyrimidine cyclase subfamily. In terms of assembly, homodimer. Requires Mn(2+) as cofactor.

It localises to the cytoplasm. It catalyses the reaction UTP = 3',5'-cyclic UMP + diphosphate. Its function is as follows. Pycsar (pyrimidine cyclase system for antiphage resistance) provides immunity against bacteriophage. The pyrimidine cyclase (PycC) synthesizes cyclic nucleotides in response to infection; these serve as specific second messenger signals. The signals activate the adjacent effector, leading to bacterial cell death and abortive phage infection. A clade C Pycsar system. The pyrimidine cyclase gene of a two-gene Pycsar system, weakly generates cyclic UMP (cUMP) from UTP, has little to no activity on ATP, CTP or GTP. Expression of this and adjacent effector TpPycTM (AC A0A1T4LJG1) probably confers resistance to bacteriophage. The genes are probably only expressed in response to bacteriophage infection. The polypeptide is Uridylate cyclase (Treponema porcinum).